A 65-amino-acid polypeptide reads, in one-letter code: LTCLNCPEVYCRRFQKCRNGEKICFKKFDQRNLLGKRYEIGCAATCPEAKPREIVQCCSTDKCNR.

5 cysteine pairs are disulfide-bonded: Cys-3-Cys-24, Cys-6-Cys-11, Cys-17-Cys-42, Cys-46-Cys-57, and Cys-58-Cys-63.

The protein belongs to the three-finger toxin family. Ancestral subfamily. Orphan group II sub-subfamily. In terms of tissue distribution, expressed by the venom gland.

The protein localises to the secreted. Binds with low affinity to muscular (alpha-1-beta-1-delta-epsilon/CHRNA1-CHRNB1-CHRND-CHRNE) and very low affinity to neuronal (alpha-7/CHRNA7) nicotinic acetylcholine receptor (nAChR). This chain is Weak neurotoxin 8, found in Naja naja (Indian cobra).